Reading from the N-terminus, the 382-residue chain is Chaperone protein DnaJ 2 (382 aa).

The 65-residue stretch at 4 to 68 folds into the J domain; the sequence is DYYGLLGVSK…DKRRIVDLGG (65 aa). The CR-type zinc finger occupies 132-214; sequence GVTKQVTVDT…CMGDGRIRAR (83 aa). The Zn(2+) site is built by Cys145, Cys148, Cys162, Cys165, Cys188, Cys191, Cys202, and Cys205. CXXCXGXG motif repeat units lie at residues 145–152, 162–169, 188–195, and 202–209; these read CDRCQGKG, CDTCGGRG, CPTCRGVG, and CQQCMGDG.

Belongs to the DnaJ family. As to quaternary structure, homodimer. Interacts with RNase J. It depends on Zn(2+) as a cofactor.

The protein localises to the cytoplasm. Its function is as follows. Participates actively in the response to hyperosmotic and heat shock by preventing the aggregation of stress-denatured proteins and by disaggregating proteins, also in an autonomous, DnaK-independent fashion. Unfolded proteins bind initially to DnaJ; upon interaction with the DnaJ-bound protein, DnaK hydrolyzes its bound ATP, resulting in the formation of a stable complex. GrpE releases ADP from DnaK; ATP binding to DnaK triggers the release of the substrate protein, thus completing the reaction cycle. Several rounds of ATP-dependent interactions between DnaJ, DnaK and GrpE are required for fully efficient folding. Also involved, together with DnaK and GrpE, in the DNA replication of plasmids through activation of initiation proteins. Inhibits the beta-lactamase and RNase activity of RNase J. This is Chaperone protein DnaJ 2 from Mycobacterium tuberculosis (strain ATCC 25618 / H37Rv).